The following is a 235-amino-acid chain: Large ribosomal subunit protein uL1 (235 aa).

Belongs to the universal ribosomal protein uL1 family. As to quaternary structure, part of the 50S ribosomal subunit.

Its function is as follows. Binds directly to 23S rRNA. The L1 stalk is quite mobile in the ribosome, and is involved in E site tRNA release. Protein L1 is also a translational repressor protein, it controls the translation of the L11 operon by binding to its mRNA. This chain is Large ribosomal subunit protein uL1, found in Methylobacterium nodulans (strain LMG 21967 / CNCM I-2342 / ORS 2060).